A 44-amino-acid polypeptide reads, in one-letter code: Cuticle protein CP466 (44 aa).

Tandem repeats lie at residues 3-20 and 27-44.

As to expression, calcified shell.

This chain is Cuticle protein CP466, found in Cancer pagurus (Rock crab).